A 121-amino-acid polypeptide reads, in one-letter code: ATP synthase epsilon chain (121 aa).

It belongs to the ATPase epsilon chain family. In terms of assembly, F-type ATPases have 2 components, CF(1) - the catalytic core - and CF(0) - the membrane proton channel. CF(1) has five subunits: alpha(3), beta(3), gamma(1), delta(1), epsilon(1). CF(0) has three main subunits: a, b and c.

It is found in the cell membrane. Produces ATP from ADP in the presence of a proton gradient across the membrane. This chain is ATP synthase epsilon chain, found in Mycolicibacterium smegmatis (strain ATCC 700084 / mc(2)155) (Mycobacterium smegmatis).